The sequence spans 445 residues: Phospho-alpha-glucosidase PagL (445 aa).

An NAD(+)-binding site is contributed by 4-71 (YSICIVGGGS…ELEEVIWTTD (68 aa)). Substrate is bound by residues arginine 94 and asparagine 148. Cysteine 171 serves as a coordination point for Mn(2+). Residue aspartate 172 is the Proton donor of the active site. Histidine 201 contacts Mn(2+). Tyrosine 264 (proton acceptor) is an active-site residue. Arginine 284 lines the substrate pocket.

Belongs to the glycosyl hydrolase 4 family. Homotetramer. NAD(+) is required as a cofactor. The cofactor is Mn(2+).

In terms of biological role, phospho-alpha-glucosidase that catalyzes the hydrolysis of p-nitrophenyl-alpha-D-glucopyranoside 6-phosphate, but is not able to cleave 'natural' phospho-alpha-glucosides produced via the phosphoenolpyruvate-dependent sugar phosphotransferase system (PEP-PTS). The polypeptide is Phospho-alpha-glucosidase PagL (pagL) (Clostridium acetobutylicum (strain ATCC 824 / DSM 792 / JCM 1419 / IAM 19013 / LMG 5710 / NBRC 13948 / NRRL B-527 / VKM B-1787 / 2291 / W)).